The following is a 430-amino-acid chain: Glutamate-1-semialdehyde 2,1-aminomutase (430 aa).

Lys267 carries the N6-(pyridoxal phosphate)lysine modification.

This sequence belongs to the class-III pyridoxal-phosphate-dependent aminotransferase family. HemL subfamily. Homodimer. It depends on pyridoxal 5'-phosphate as a cofactor.

The protein localises to the cytoplasm. The catalysed reaction is (S)-4-amino-5-oxopentanoate = 5-aminolevulinate. It functions in the pathway porphyrin-containing compound metabolism; protoporphyrin-IX biosynthesis; 5-aminolevulinate from L-glutamyl-tRNA(Glu): step 2/2. The polypeptide is Glutamate-1-semialdehyde 2,1-aminomutase (Anaeromyxobacter sp. (strain K)).